A 166-amino-acid chain; its full sequence is Large ribosomal subunit protein uL10 (166 aa).

This sequence belongs to the universal ribosomal protein uL10 family. As to quaternary structure, part of the ribosomal stalk of the 50S ribosomal subunit. The N-terminus interacts with L11 and the large rRNA to form the base of the stalk. The C-terminus forms an elongated spine to which L12 dimers bind in a sequential fashion forming a multimeric L10(L12)X complex.

Functionally, forms part of the ribosomal stalk, playing a central role in the interaction of the ribosome with GTP-bound translation factors. This is Large ribosomal subunit protein uL10 from Streptococcus equi subsp. zooepidemicus (strain MGCS10565).